We begin with the raw amino-acid sequence, 940 residues long: Chromatin assembly factor 1 subunit FSM (940 aa).

3 disordered regions span residues 317–473 (NVDD…DPCT), 638–682 (VDSD…FFVP), and 919–940 (KTTQ…PSSQ). The span at 320-329 (DSQLQKNTST) shows a compositional bias: polar residues. The stretch at 329-439 (TNEKDTQKAQ…LKKQLAIQKQ (111 aa)) forms a coiled coil. The span at 330-429 (NEKDTQKAQK…QKRREKEAVQ (100 aa)) shows a compositional bias: basic and acidic residues. The span at 430–440 (LKKQLAIQKQA) shows a compositional bias: low complexity. Over residues 445–461 (RFFKNKKDSEKLEKPGG) the composition is skewed to basic and acidic residues. Over residues 638 to 650 (VDSDDEWEEEDPG) the composition is skewed to acidic residues.

This sequence belongs to the CHAF1A family. Component of the chromatin assembly factor 1 (CAF-1) complex, composed of FSM (FAS1), FAS2 and MSI1. In terms of tissue distribution, in embryo, expressed in leaf primordia, coleoptile and radicle. In seedlings, expressed in cell division zone of roots, SAM and leaf primordia. Expressed in floral organ primordia.

Its subcellular location is the nucleus. Its function is as follows. Component of the chromatin assembly factor complex (CAF-1) involved in chromatin assembly following DNA replication and DNA repair. Required for several aspects of development, including apical meristem maintenance by regulating the durations of the S- and G2-phases of the cell cycle through its chromatin assembly activity. This is Chromatin assembly factor 1 subunit FSM (FSM) from Oryza sativa subsp. japonica (Rice).